We begin with the raw amino-acid sequence, 138 residues long: Membrane protein P8A7 (138 aa).

4 helical membrane-spanning segments follow: residues 12–30 (ILVI…YLFV), 32–56 (GLFH…IVLL), 71–90 (YTYW…LILG), and 93–118 (GFFL…LLGC).

It localises to the membrane. The chain is Membrane protein P8A7 (pmpA) from Dictyostelium discoideum (Social amoeba).